We begin with the raw amino-acid sequence, 1487 residues long: Protein clueless (1487 aa).

Disordered stretches follow at residues 1–94 (MALE…NGDA) and 110–140 (GATA…EAAA). Over residues 56–65 (TKKKGKKNRN) the composition is skewed to basic residues. Residues 111–126 (ATAAAGATEAAAEVGS) are compositionally biased toward low complexity. A Phosphoserine modification is found at Ser-284. A Clu domain is found at 438 to 680 (RAEDAFSSKL…RTFPPDVNFL (243 aa)). Residues 739–785 (QAEKELPSITEKQEEPEKEQAEKSSAEQPEKEKEKEKDKEDEQKESK) show a composition bias toward basic and acidic residues. 2 disordered regions span residues 739–794 (QAEK…TKSA) and 980–1040 (VSSE…TAST). Residues 988–1005 (KQSRNNGGKHNKHNKSNK) show a composition bias toward basic residues. Positions 1009–1019 (PQSTSAAAATQ) are enriched in polar residues. Low complexity predominate over residues 1020-1040 (NGHSSTAANGSANSAANTAST). 3 TPR repeats span residues 1140-1173 (AYNF…LNNV), 1266-1299 (ALID…NLKY), and 1301-1334 (GNKA…EKET). Positions 1456–1487 (DTEQPKEGSEVEGATATQLTNGSEDSTTTVSS) are disordered. A compositionally biased stretch (polar residues) spans 1470–1487 (TATQLTNGSEDSTTTVSS).

Belongs to the CLU family.

The protein resides in the cytoplasm. MRNA-binding protein involved in proper cytoplasmic distribution of mitochondria. This Drosophila mojavensis (Fruit fly) protein is Protein clueless.